A 257-amino-acid polypeptide reads, in one-letter code: Imidazole glycerol phosphate synthase subunit HisF (257 aa).

Catalysis depends on residues Asp11 and Asp130.

The protein belongs to the HisA/HisF family. Heterodimer of HisH and HisF.

It localises to the cytoplasm. It carries out the reaction 5-[(5-phospho-1-deoxy-D-ribulos-1-ylimino)methylamino]-1-(5-phospho-beta-D-ribosyl)imidazole-4-carboxamide + L-glutamine = D-erythro-1-(imidazol-4-yl)glycerol 3-phosphate + 5-amino-1-(5-phospho-beta-D-ribosyl)imidazole-4-carboxamide + L-glutamate + H(+). It functions in the pathway amino-acid biosynthesis; L-histidine biosynthesis; L-histidine from 5-phospho-alpha-D-ribose 1-diphosphate: step 5/9. Its function is as follows. IGPS catalyzes the conversion of PRFAR and glutamine to IGP, AICAR and glutamate. The HisF subunit catalyzes the cyclization activity that produces IGP and AICAR from PRFAR using the ammonia provided by the HisH subunit. This is Imidazole glycerol phosphate synthase subunit HisF from Photobacterium profundum (strain SS9).